The following is a 209-amino-acid chain: Ribosomal RNA small subunit methyltransferase G (209 aa).

Residues Gly-71, Phe-76, 122–123 (AE), and Arg-135 each bind S-adenosyl-L-methionine.

Belongs to the methyltransferase superfamily. RNA methyltransferase RsmG family.

It is found in the cytoplasm. Its function is as follows. Specifically methylates the N7 position of a guanine in 16S rRNA. The polypeptide is Ribosomal RNA small subunit methyltransferase G (Phocaeicola vulgatus (strain ATCC 8482 / DSM 1447 / JCM 5826 / CCUG 4940 / NBRC 14291 / NCTC 11154) (Bacteroides vulgatus)).